Reading from the N-terminus, the 214-residue chain is GTP-binding nuclear protein Ran (214 aa).

The 165-residue stretch at 6–170 folds into the Small GTPase Ran-type domain; that stretch reads YIPQYKLILV…LWLARRLSNQ (165 aa). 17-24 is a GTP binding site; sequence DGGVGKTT. The interval 36 to 44 is switch-I; the sequence is KKYIPTLGV. GTP is bound by residues Gly-67, 121-124, and 149-151; these read NKVD and SAR. Residues 67–83 form a switch-II region; it reads GQEKFGGLRDGYYIKSD.

Belongs to the small GTPase superfamily. Ran family. Found in a nuclear export complex with RanGTP, exportin and pre-miRNA.

Its subcellular location is the nucleus. Functionally, GTP-binding protein involved in nucleocytoplasmic transport. Required for the import of protein into the nucleus and also for RNA export. Involved in chromatin condensation and control of cell cycle. This Plasmodium falciparum protein is GTP-binding nuclear protein Ran.